The primary structure comprises 505 residues: Apolipoprotein N-acyltransferase (505 aa).

The next 6 membrane-spanning stretches (helical) occupy residues 15-46, 55-75, 89-109, 129-149, 161-181, and 192-212; these read AAFV…LLLL, ALIA…WVHV, LFLM…FGWL, LWLI…WLWL, FAPI…AGSL, and MACI…MQWV. Positions 225 to 471 constitute a CN hydrolase domain; that stretch reads IQGNIEQGLK…TGVLKATVTP (247 aa). The active-site Proton acceptor is the Glu264. Residue Lys330 is part of the active site. Cys382 (nucleophile) is an active-site residue. The chain crosses the membrane as a helical span at residues 479 to 499; sequence FLWGTTPLYLWVGLAAGFAFW.

This sequence belongs to the CN hydrolase family. Apolipoprotein N-acyltransferase subfamily.

It is found in the cell inner membrane. It carries out the reaction N-terminal S-1,2-diacyl-sn-glyceryl-L-cysteinyl-[lipoprotein] + a glycerophospholipid = N-acyl-S-1,2-diacyl-sn-glyceryl-L-cysteinyl-[lipoprotein] + a 2-acyl-sn-glycero-3-phospholipid + H(+). The protein operates within protein modification; lipoprotein biosynthesis (N-acyl transfer). Functionally, catalyzes the phospholipid dependent N-acylation of the N-terminal cysteine of apolipoprotein, the last step in lipoprotein maturation. The protein is Apolipoprotein N-acyltransferase of Vibrio cholerae serotype O1 (strain ATCC 39315 / El Tor Inaba N16961).